The chain runs to 536 residues: Bifunctional purine biosynthesis protein PurH (536 aa).

In terms of domain architecture, MGS-like spans 8–158; it reads IPAPDEVRIK…KNHAYVTIVT (151 aa).

The protein belongs to the PurH family.

The catalysed reaction is (6R)-10-formyltetrahydrofolate + 5-amino-1-(5-phospho-beta-D-ribosyl)imidazole-4-carboxamide = 5-formamido-1-(5-phospho-D-ribosyl)imidazole-4-carboxamide + (6S)-5,6,7,8-tetrahydrofolate. It carries out the reaction IMP + H2O = 5-formamido-1-(5-phospho-D-ribosyl)imidazole-4-carboxamide. The protein operates within purine metabolism; IMP biosynthesis via de novo pathway; 5-formamido-1-(5-phospho-D-ribosyl)imidazole-4-carboxamide from 5-amino-1-(5-phospho-D-ribosyl)imidazole-4-carboxamide (10-formyl THF route): step 1/1. It functions in the pathway purine metabolism; IMP biosynthesis via de novo pathway; IMP from 5-formamido-1-(5-phospho-D-ribosyl)imidazole-4-carboxamide: step 1/1. The polypeptide is Bifunctional purine biosynthesis protein PurH (Rhizobium meliloti (strain 1021) (Ensifer meliloti)).